The following is a 168-amino-acid chain: Phosphopantetheine adenylyltransferase (168 aa).

T13 is a substrate binding site. Residues 13-14 (TF) and H21 each bind ATP. Substrate is bound by residues K45, L78, and R92. ATP is bound by residues 93-95 (GLR), E103, and 128-134 (TQFISSS).

Belongs to the bacterial CoaD family. Homohexamer. Mg(2+) is required as a cofactor.

It is found in the cytoplasm. It carries out the reaction (R)-4'-phosphopantetheine + ATP + H(+) = 3'-dephospho-CoA + diphosphate. It functions in the pathway cofactor biosynthesis; coenzyme A biosynthesis; CoA from (R)-pantothenate: step 4/5. Functionally, reversibly transfers an adenylyl group from ATP to 4'-phosphopantetheine, yielding dephospho-CoA (dPCoA) and pyrophosphate. The sequence is that of Phosphopantetheine adenylyltransferase from Wolbachia pipientis wMel.